The primary structure comprises 325 residues: H-2 class I histocompatibility antigen, Q10 alpha chain (325 aa).

The N-terminal stretch at methionine 1–alanine 24 is a signal peptide. The segment at glycine 25–serine 114 is alpha-1. At glycine 25 to histidine 310 the chain is on the extracellular side. Asparagine 110 is a glycosylation site (N-linked (GlcNAc...) asparagine). Residues glycine 115–threonine 206 form an alpha-2 region. 2 disulfides stabilise this stretch: cysteine 125/cysteine 188 and cysteine 227/cysteine 283. Positions aspartate 207 to tryptophan 298 are alpha-3. In terms of domain architecture, Ig-like C1-type spans proline 209–arginine 297. The N-linked (GlcNAc...) asparagine glycan is linked to asparagine 280. The segment at glutamate 299 to histidine 310 is connecting peptide. Residues isoleucine 311–tyrosine 324 traverse the membrane as a helical segment.

The protein belongs to the MHC class I family. As to quaternary structure, heterodimer of an alpha chain and a beta chain (beta-2-microglobulin).

The protein resides in the membrane. In terms of biological role, involved in the presentation of foreign antigens to the immune system. This is H-2 class I histocompatibility antigen, Q10 alpha chain (H2-Q10) from Mus musculus (Mouse).